A 97-amino-acid polypeptide reads, in one-letter code: MKAVEFVENPYGIRLRIFLQPKASRDQIVGLHDNELKVAITAPPVDGAANAYLLKYLSKLFKVPKSSIVLEKGELQRHKQLFVPAPKLLPKEIEQWL.

This sequence belongs to the UPF0235 family.

This Haemophilus ducreyi (strain 35000HP / ATCC 700724) protein is UPF0235 protein HD_0778.